The primary structure comprises 687 residues: MTTQTLLIELLTEELPPKALNNLGNHFAASVAEGLEKAQLVDGAAEFTAYASPRRLAVQVKNVKAVQADQKIVKKGPAVANAVKDGTPTKALEGFARGAGAKIEDLTIVHDGRQDVYAYEYVQTGRPLGGLLENIINQAVKKLPIPKVMRWGSSTFTFVRPVHGLIVLHGGDVVNVSVLGLQSGNQTLGHRFLSDGEIIIENADSYAAQMRGQGKVVASFAGRKAAIQTALEGQARRLNATVAADEALLDEVTALVEWPVVLEAGFEEHFLAVPQECLILTMQQNQKYFPLLDQNGKLMNRFLLVSNLQTEDPSHIIRGNERVLRARLSDAEFFYKQDQKATLESRLPKLANVVYHNKIGSQAERIERLQSIAAHIAKALGADAAAAERAARLAKADLVTEMVGEFPELQGTMGKYYARLDGETEEIAEAIEQHYQPRFAGDKLPESKIAAAVALADKLETLVGIWGIGLIPTGDKDPYALRRAALGILRMLMQYGLDVNELIQTAFDSFPQGLLNEKTPSETADFMQARLAVLLQNDYPQDIVAAVLAKQPRRLDDLTAKLQAVAVFKQLPEAAALAAANKRVQNLLKKADAELGAVNESLLQQDEEKALYAAAQGLQPKIAAAVAEGNFQTALSELASVKPQVDAFFDGVMVMAEDAAVKQNRLNLLNRLAGQMNAVADIALLGE.

The protein belongs to the class-II aminoacyl-tRNA synthetase family. Tetramer of two alpha and two beta subunits.

It is found in the cytoplasm. It catalyses the reaction tRNA(Gly) + glycine + ATP = glycyl-tRNA(Gly) + AMP + diphosphate. This chain is Glycine--tRNA ligase beta subunit, found in Neisseria gonorrhoeae (strain ATCC 700825 / FA 1090).